Here is a 510-residue protein sequence, read N- to C-terminus: Probable cytochrome P450 4aa1 (510 aa).

Cys-450 lines the heme pocket.

Belongs to the cytochrome P450 family. It depends on heme as a cofactor.

The protein resides in the endoplasmic reticulum membrane. The protein localises to the microsome membrane. May be involved in the metabolism of insect hormones and in the breakdown of synthetic insecticides. The chain is Probable cytochrome P450 4aa1 (Cyp4aa1) from Drosophila melanogaster (Fruit fly).